The sequence spans 221 residues: Thiopurine S-methyltransferase (221 aa).

S-adenosyl-L-methionine-binding residues include tryptophan 12, leucine 47, glutamate 68, and arginine 125.

It belongs to the class I-like SAM-binding methyltransferase superfamily. TPMT family.

The protein localises to the cytoplasm. It carries out the reaction S-adenosyl-L-methionine + a thiopurine = S-adenosyl-L-homocysteine + a thiopurine S-methylether.. In Legionella pneumophila subsp. pneumophila (strain Philadelphia 1 / ATCC 33152 / DSM 7513), this protein is Thiopurine S-methyltransferase.